A 381-amino-acid polypeptide reads, in one-letter code: Queuine tRNA-ribosyltransferase (381 aa).

Residue aspartate 96 is the Proton acceptor of the active site. Substrate contacts are provided by residues 96 to 100 (DSGGF), aspartate 150, glutamine 193, and glycine 220. Residues 251-257 (GVGSPDS) form an RNA binding region. The active-site Nucleophile is the aspartate 270. Positions 275–279 (TRIAR) are RNA binding; important for wobble base 34 recognition. Cysteine 308, cysteine 310, cysteine 313, and histidine 339 together coordinate Zn(2+).

It belongs to the queuine tRNA-ribosyltransferase family. As to quaternary structure, homodimer. Within each dimer, one monomer is responsible for RNA recognition and catalysis, while the other monomer binds to the replacement base PreQ1. Zn(2+) is required as a cofactor.

The enzyme catalyses 7-aminomethyl-7-carbaguanine + guanosine(34) in tRNA = 7-aminomethyl-7-carbaguanosine(34) in tRNA + guanine. It functions in the pathway tRNA modification; tRNA-queuosine biosynthesis. Functionally, catalyzes the base-exchange of a guanine (G) residue with the queuine precursor 7-aminomethyl-7-deazaguanine (PreQ1) at position 34 (anticodon wobble position) in tRNAs with GU(N) anticodons (tRNA-Asp, -Asn, -His and -Tyr). Catalysis occurs through a double-displacement mechanism. The nucleophile active site attacks the C1' of nucleotide 34 to detach the guanine base from the RNA, forming a covalent enzyme-RNA intermediate. The proton acceptor active site deprotonates the incoming PreQ1, allowing a nucleophilic attack on the C1' of the ribose to form the product. After dissociation, two additional enzymatic reactions on the tRNA convert PreQ1 to queuine (Q), resulting in the hypermodified nucleoside queuosine (7-(((4,5-cis-dihydroxy-2-cyclopenten-1-yl)amino)methyl)-7-deazaguanosine). This Bacillus licheniformis (strain ATCC 14580 / DSM 13 / JCM 2505 / CCUG 7422 / NBRC 12200 / NCIMB 9375 / NCTC 10341 / NRRL NRS-1264 / Gibson 46) protein is Queuine tRNA-ribosyltransferase.